The primary structure comprises 312 residues: Small ribosomal subunit protein uS2 (312 aa).

The protein belongs to the universal ribosomal protein uS2 family. Component of the small ribosomal subunit. Mature ribosomes consist of a small (40S) and a large (60S) subunit. The 40S subunit contains about 33 different proteins and 1 molecule of RNA (18S). The 60S subunit contains about 49 different proteins and 3 molecules of RNA (25S, 5.8S and 5S). Interacts with ribosomal protein S21.

The protein resides in the cytoplasm. Its function is as follows. Required for the assembly and/or stability of the 40S ribosomal subunit. Required for the processing of the 20S rRNA-precursor to mature 18S rRNA in a late step of the maturation of 40S ribosomal subunits. In Vitis vinifera (Grape), this protein is Small ribosomal subunit protein uS2.